Here is a 336-residue protein sequence, read N- to C-terminus: Phosphoribosylformylglycinamidine cyclo-ligase (336 aa).

This sequence belongs to the AIR synthase family.

Its subcellular location is the cytoplasm. The catalysed reaction is 2-formamido-N(1)-(5-O-phospho-beta-D-ribosyl)acetamidine + ATP = 5-amino-1-(5-phospho-beta-D-ribosyl)imidazole + ADP + phosphate + H(+). It participates in purine metabolism; IMP biosynthesis via de novo pathway; 5-amino-1-(5-phospho-D-ribosyl)imidazole from N(2)-formyl-N(1)-(5-phospho-D-ribosyl)glycinamide: step 2/2. The protein is Phosphoribosylformylglycinamidine cyclo-ligase of Thermoanaerobacter pseudethanolicus (strain ATCC 33223 / 39E) (Clostridium thermohydrosulfuricum).